Consider the following 158-residue polypeptide: 6,7-dimethyl-8-ribityllumazine synthase (158 aa).

5-amino-6-(D-ribitylamino)uracil contacts are provided by residues Phe22, 56–58 (ALE), and 80–82 (VVI). A (2S)-2-hydroxy-3-oxobutyl phosphate-binding site is contributed by 85–86 (ET). Residue His88 is the Proton donor of the active site. Asn113 lines the 5-amino-6-(D-ribitylamino)uracil pocket. Arg127 lines the (2S)-2-hydroxy-3-oxobutyl phosphate pocket.

The protein belongs to the DMRL synthase family.

It catalyses the reaction (2S)-2-hydroxy-3-oxobutyl phosphate + 5-amino-6-(D-ribitylamino)uracil = 6,7-dimethyl-8-(1-D-ribityl)lumazine + phosphate + 2 H2O + H(+). The protein operates within cofactor biosynthesis; riboflavin biosynthesis; riboflavin from 2-hydroxy-3-oxobutyl phosphate and 5-amino-6-(D-ribitylamino)uracil: step 1/2. Its function is as follows. Catalyzes the formation of 6,7-dimethyl-8-ribityllumazine by condensation of 5-amino-6-(D-ribitylamino)uracil with 3,4-dihydroxy-2-butanone 4-phosphate. This is the penultimate step in the biosynthesis of riboflavin. The protein is 6,7-dimethyl-8-ribityllumazine synthase of Neisseria meningitidis serogroup C / serotype 2a (strain ATCC 700532 / DSM 15464 / FAM18).